A 272-amino-acid polypeptide reads, in one-letter code: Ribonuclease HII (272 aa).

The RNase H type-2 domain maps to 87-272 (KYVAGVDEVG…HRMSFLKNIL (186 aa)). A divalent metal cation-binding residues include aspartate 93, glutamate 94, and aspartate 188.

The protein belongs to the RNase HII family. Mn(2+) is required as a cofactor. Requires Mg(2+) as cofactor.

It localises to the cytoplasm. The enzyme catalyses Endonucleolytic cleavage to 5'-phosphomonoester.. Endonuclease that specifically degrades the RNA of RNA-DNA hybrids. The sequence is that of Ribonuclease HII from Clostridium perfringens (strain 13 / Type A).